The primary structure comprises 60 residues: uncharacterized protein (60 aa).

This is an uncharacterized protein from Escherichia coli O157:H7.